Here is a 373-residue protein sequence, read N- to C-terminus: Probable neutral protease 2 homolog MCYG_05201 (373 aa).

Residues 1-19 form the signal peptide; sequence MQFFTALAAVGALVAPALA. A propeptide spanning residues 20-187 is cleaved from the precursor; the sequence is LPTQVPANQS…AHIVGTIDKR (168 aa). 2 disulfides stabilise this stretch: Cys-195–Cys-265 and Cys-272–Cys-290. Zn(2+) is bound at residue His-314. Residue Glu-315 is part of the active site. Zn(2+) contacts are provided by His-318 and Asp-329.

Belongs to the peptidase M35 family. Requires Zn(2+) as cofactor.

It is found in the secreted. The catalysed reaction is Preferential cleavage of bonds with hydrophobic residues in P1'. Also 3-Asn-|-Gln-4 and 8-Gly-|-Ser-9 bonds in insulin B chain.. Probable secreted metalloprotease that shows high activities on basic nuclear substrates such as histone and protamine. May be involved in virulence. This chain is Probable neutral protease 2 homolog MCYG_05201, found in Arthroderma otae (strain ATCC MYA-4605 / CBS 113480) (Microsporum canis).